A 649-amino-acid polypeptide reads, in one-letter code: Threonine--tRNA ligase (649 aa).

A TGS domain is found at 1–61; it reads MIKITFPDGA…TQDGSIEIVT (61 aa). Residues 242–540 are catalytic; that stretch reads DHRKLGKELD…LIETYKGAFP (299 aa). Zn(2+)-binding residues include Cys-336, His-387, and His-517.

Belongs to the class-II aminoacyl-tRNA synthetase family. In terms of assembly, homodimer. Requires Zn(2+) as cofactor.

It localises to the cytoplasm. It catalyses the reaction tRNA(Thr) + L-threonine + ATP = L-threonyl-tRNA(Thr) + AMP + diphosphate + H(+). Catalyzes the attachment of threonine to tRNA(Thr) in a two-step reaction: L-threonine is first activated by ATP to form Thr-AMP and then transferred to the acceptor end of tRNA(Thr). Also edits incorrectly charged L-seryl-tRNA(Thr). The sequence is that of Threonine--tRNA ligase from Streptococcus mutans serotype c (strain ATCC 700610 / UA159).